We begin with the raw amino-acid sequence, 158 residues long: MYYDIIESPIGPILLAGNEKGLKHLDFLKGKKRIEIPADWIENKKFFREAARQLEAYFSGKLESFDLKLAPEGTDFQKSVWKALCEIPYGETRTYKEIAVSIGKPRAYRAVGLANNRNPIAIIIPCHRVIGSDGKLTGYASGLDIKEFLLKLEENNLR.

The active-site Nucleophile; methyl group acceptor is Cys126.

Belongs to the MGMT family.

The protein localises to the cytoplasm. The enzyme catalyses a 6-O-methyl-2'-deoxyguanosine in DNA + L-cysteinyl-[protein] = S-methyl-L-cysteinyl-[protein] + a 2'-deoxyguanosine in DNA. It catalyses the reaction a 4-O-methyl-thymidine in DNA + L-cysteinyl-[protein] = a thymidine in DNA + S-methyl-L-cysteinyl-[protein]. Functionally, involved in the cellular defense against the biological effects of O6-methylguanine (O6-MeG) and O4-methylthymine (O4-MeT) in DNA. Repairs the methylated nucleobase in DNA by stoichiometrically transferring the methyl group to a cysteine residue in the enzyme. This is a suicide reaction: the enzyme is irreversibly inactivated. The chain is Methylated-DNA--protein-cysteine methyltransferase from Methanosarcina barkeri (strain Fusaro / DSM 804).